Here is an 88-residue protein sequence, read N- to C-terminus: Large ribosomal subunit protein eL34 (88 aa).

This sequence belongs to the eukaryotic ribosomal protein eL34 family.

In Saccharolobus solfataricus (strain ATCC 35092 / DSM 1617 / JCM 11322 / P2) (Sulfolobus solfataricus), this protein is Large ribosomal subunit protein eL34.